Here is a 479-residue protein sequence, read N- to C-terminus: Serine protease HTRA1A (479 aa).

The signal sequence occupies residues 1–18 (MILVTLFCICALVTSLQA). In terms of domain architecture, IGFBP N-terminal spans 27–111 (VIGGCPSHCD…RGKQGVCVCK (85 aa)). Intrachain disulfides connect Cys31–Cys56, Cys35–Cys58, Cys40–Cys59, Cys47–Cys62, Cys70–Cys87, and Cys81–Cys108. In terms of domain architecture, Kazal-like spans 96–155 (SATVRRRGKQGVCVCKSSDPVCGSDGVSYRDICELKRVSNRAQSLQQPPVLFIQRGACGT). The segment at 203 to 363 (GSGFVVSDDG…IPSDKIRQFL (161 aa)) is serine protease. Catalysis depends on charge relay system residues His219, Asp249, and Ser327. A PDZ domain is found at 364–466 (AESYDRLARG…LRVVVRRGNE (103 aa)).

This sequence belongs to the peptidase S1C family. Forms homotrimers. In the presence of substrate, may form higher-order multimers in a PDZ-independent manner.

It is found in the secreted. The protein resides in the cytoplasm. It localises to the cytosol. In terms of biological role, serine protease with a variety of targets, including extracellular matrix proteins and proteoglycans. Through cleavage of proteoglycans, may release soluble FGF-glycosaminoglycan complexes that promote the range and intensity of FGF signals in the extracellular space. Regulates the availability of insulin-like growth factors (IGFs) by cleaving IGF-binding proteins. Inhibits signaling mediated by TGF-beta family members. Consequently, may regulate many physiological processes. Intracellularly, degrades TSC2, leading to the activation of TSC2 downstream targets. This chain is Serine protease HTRA1A (htra1a), found in Danio rerio (Zebrafish).